Here is a 513-residue protein sequence, read N- to C-terminus: GMP synthase [glutamine-hydrolyzing] (513 aa).

Positions 8-198 constitute a Glutamine amidotransferase type-1 domain; the sequence is KIIVLDYGSQ…ALNICGAKGN (191 aa). The Nucleophile role is filled by Cys85. Residues His172 and Glu174 contribute to the active site. The region spanning 199–388 is the GMPS ATP-PPase domain; that stretch reads WSMENFIDMQ…LGMPDEIVWR (190 aa). 226 to 232 is an ATP binding site; the sequence is SGGVDSS.

As to quaternary structure, homodimer.

It carries out the reaction XMP + L-glutamine + ATP + H2O = GMP + L-glutamate + AMP + diphosphate + 2 H(+). The protein operates within purine metabolism; GMP biosynthesis; GMP from XMP (L-Gln route): step 1/1. Catalyzes the synthesis of GMP from XMP. The chain is GMP synthase [glutamine-hydrolyzing] (guaA) from Lactococcus lactis subsp. cremoris (strain MG1363).